A 290-amino-acid polypeptide reads, in one-letter code: Cell division protein ZipA (290 aa).

Residue methionine 1 is a topological domain, periplasmic. A helical transmembrane segment spans residues 2-22 (DIGLREWLIVIGLIVIAGILF). Topologically, residues 23-290 (DGWRRMRGGK…HERRSLMQKR (268 aa)) are cytoplasmic. The segment at 66–143 (REPSFDEQDL…REKAPSVAAA (78 aa)) is disordered. A compositionally biased stretch (basic and acidic residues) spans 81-99 (REGKERKGGKRQDEPRQGD). Acidic residues predominate over residues 100-114 (LDLDEGMALEADPSD).

This sequence belongs to the ZipA family. Interacts with FtsZ via their C-terminal domains.

The protein resides in the cell inner membrane. In terms of biological role, essential cell division protein that stabilizes the FtsZ protofilaments by cross-linking them and that serves as a cytoplasmic membrane anchor for the Z ring. Also required for the recruitment to the septal ring of downstream cell division proteins. The sequence is that of Cell division protein ZipA from Pseudomonas paraeruginosa (strain DSM 24068 / PA7) (Pseudomonas aeruginosa (strain PA7)).